Here is a 341-residue protein sequence, read N- to C-terminus: Geranylfarnesyl diphosphate synthase (341 aa).

Isopentenyl diphosphate is bound by residues Lys-47, Arg-50, and Gln-95. 2 residues coordinate Mg(2+): Asp-102 and Asp-106. An an all-trans-polyprenyl diphosphate-binding site is contributed by Arg-111. Arg-112 contributes to the isopentenyl diphosphate binding site. An all-trans-polyprenyl diphosphate is bound by residues Lys-193, Thr-194, and Gln-231.

This sequence belongs to the FPP/GGPP synthase family. As to quaternary structure, homodimer. Requires Mg(2+) as cofactor.

The protein resides in the cytoplasm. The catalysed reaction is isopentenyl diphosphate + (2E,6E,10E)-geranylgeranyl diphosphate = (2E,6E,10E,14E)-geranylfarnesyl diphosphate + diphosphate. In terms of biological role, probably involved in biosynthesis of the precursor for C25 (sesterterpanyl chain) moiety of C20-C25 diether (2-O-sesterterpanyl-3-O-phytanyl-sn-glycer) membrane lipid. Catalyzes the condensation of isopentenyl pyrophosphate with the allylic pyrophosphates to yield geranylfarnesyl diphosphate (GFPP). Geranylgeranyl diphosphate (GGPP) is the preferred substrate, but dimethylallyl diphosphate (DMAPP) and farnesyl diphosphate (FPP) can also be used as allylic substrate. The polypeptide is Geranylfarnesyl diphosphate synthase (idsA3) (Natronomonas pharaonis (strain ATCC 35678 / DSM 2160 / CIP 103997 / JCM 8858 / NBRC 14720 / NCIMB 2260 / Gabara) (Halobacterium pharaonis)).